The following is a 76-amino-acid chain: Large ribosomal subunit protein uL24 (76 aa).

This sequence belongs to the universal ribosomal protein uL24 family. In terms of assembly, part of the 50S ribosomal subunit.

One of two assembly initiator proteins, it binds directly to the 5'-end of the 23S rRNA, where it nucleates assembly of the 50S subunit. Functionally, one of the proteins that surrounds the polypeptide exit tunnel on the outside of the subunit. In Campylobacter hominis (strain ATCC BAA-381 / DSM 21671 / CCUG 45161 / LMG 19568 / NCTC 13146 / CH001A), this protein is Large ribosomal subunit protein uL24.